The primary structure comprises 173 residues: Xanthine-guanine phosphoribosyltransferase (173 aa).

5-phospho-alpha-D-ribose 1-diphosphate contacts are provided by residues 48-49 (RG) and 107-115 (DDLVDTGKT). A Mg(2+)-binding site is contributed by Asp108. Residues Asp111 and Ile154 each contribute to the guanine site. Asp111 and Ile154 together coordinate xanthine. GMP-binding positions include 111-115 (DTGKT) and 153-154 (WI).

It belongs to the purine/pyrimidine phosphoribosyltransferase family. XGPT subfamily. In terms of assembly, homotetramer. The cofactor is Mg(2+).

The protein localises to the cell inner membrane. The enzyme catalyses GMP + diphosphate = guanine + 5-phospho-alpha-D-ribose 1-diphosphate. The catalysed reaction is XMP + diphosphate = xanthine + 5-phospho-alpha-D-ribose 1-diphosphate. It carries out the reaction IMP + diphosphate = hypoxanthine + 5-phospho-alpha-D-ribose 1-diphosphate. It functions in the pathway purine metabolism; GMP biosynthesis via salvage pathway; GMP from guanine: step 1/1. The protein operates within purine metabolism; XMP biosynthesis via salvage pathway; XMP from xanthine: step 1/1. Its function is as follows. Purine salvage pathway enzyme that catalyzes the transfer of the ribosyl-5-phosphate group from 5-phospho-alpha-D-ribose 1-diphosphate (PRPP) to the N9 position of the 6-oxopurines guanine and xanthine to form the corresponding ribonucleotides GMP (guanosine 5'-monophosphate) and XMP (xanthosine 5'-monophosphate), with the release of PPi. To a lesser extent, also acts on hypoxanthine. The polypeptide is Xanthine-guanine phosphoribosyltransferase (Rhodopseudomonas palustris (strain ATCC BAA-98 / CGA009)).